Reading from the N-terminus, the 156-residue chain is Histone acetyltransferase HPA2 (156 aa).

Residues 9 to 156 (ITVRFVTEND…PKILYKRKGY (148 aa)) form the N-acetyltransferase domain. 93–106 (LYVDENSRVKGAGG) is a binding site for acetyl-CoA.

The protein belongs to the acetyltransferase family. GNAT subfamily. Forms homodimers in the absence, and homotetramers in the presence of acetyl-CoA. Post-translationally, autoacetylates in an intermolecular reaction.

It catalyses the reaction L-lysyl-[protein] + acetyl-CoA = N(6)-acetyl-L-lysyl-[protein] + CoA + H(+). In terms of biological role, N-acetyltransferase that acetylates histone H3 at 'Lys-14' and histone H4 at 'Lys-5' and 'Lys-12'. Also acetylates polyamines like putrescine, spermidine and spermine, and certain other small basic proteins like nuclear HMG proteins. This is Histone acetyltransferase HPA2 from Saccharomyces cerevisiae (strain ATCC 204508 / S288c) (Baker's yeast).